The following is a 237-amino-acid chain: Purine nucleoside phosphorylase DeoD-type (237 aa).

H4 is a binding site for a purine D-ribonucleoside. Residues G20, R24, R43, and 87-90 (RVGT) each bind phosphate. Residues 179-181 (EME) and 203-204 (SD) each bind a purine D-ribonucleoside. The Proton donor role is filled by D204.

It belongs to the PNP/UDP phosphorylase family. Homohexamer; trimer of homodimers.

The enzyme catalyses a purine D-ribonucleoside + phosphate = a purine nucleobase + alpha-D-ribose 1-phosphate. It catalyses the reaction a purine 2'-deoxy-D-ribonucleoside + phosphate = a purine nucleobase + 2-deoxy-alpha-D-ribose 1-phosphate. Functionally, catalyzes the reversible phosphorolytic breakdown of the N-glycosidic bond in the beta-(deoxy)ribonucleoside molecules, with the formation of the corresponding free purine bases and pentose-1-phosphate. This chain is Purine nucleoside phosphorylase DeoD-type, found in Streptococcus gordonii (strain Challis / ATCC 35105 / BCRC 15272 / CH1 / DL1 / V288).